Consider the following 725-residue polypeptide: Threonine--tRNA ligase, cytoplasmic (725 aa).

One can recognise a TGS domain in the interval 80–142 (EPIQITLPDG…EGNAKLELLK (63 aa)).

This sequence belongs to the class-II aminoacyl-tRNA synthetase family.

The protein resides in the cytoplasm. The catalysed reaction is tRNA(Thr) + L-threonine + ATP = L-threonyl-tRNA(Thr) + AMP + diphosphate + H(+). The polypeptide is Threonine--tRNA ligase, cytoplasmic (Caenorhabditis elegans).